The sequence spans 341 residues: Biotin synthase (341 aa).

The region spanning 40–267 (AEIQVSTLLS…RSMVRLSAGR (228 aa)) is the Radical SAM core domain. The [4Fe-4S] cluster site is built by Cys55, Cys59, and Cys62. 4 residues coordinate [2Fe-2S] cluster: Cys99, Cys130, Cys190, and Arg262.

Belongs to the radical SAM superfamily. Biotin synthase family. Homodimer. Requires [4Fe-4S] cluster as cofactor. It depends on [2Fe-2S] cluster as a cofactor.

The catalysed reaction is (4R,5S)-dethiobiotin + (sulfur carrier)-SH + 2 reduced [2Fe-2S]-[ferredoxin] + 2 S-adenosyl-L-methionine = (sulfur carrier)-H + biotin + 2 5'-deoxyadenosine + 2 L-methionine + 2 oxidized [2Fe-2S]-[ferredoxin]. Its pathway is cofactor biosynthesis; biotin biosynthesis; biotin from 7,8-diaminononanoate: step 2/2. In terms of biological role, catalyzes the conversion of dethiobiotin (DTB) to biotin by the insertion of a sulfur atom into dethiobiotin via a radical-based mechanism. This chain is Biotin synthase, found in Xylella fastidiosa (strain 9a5c).